The primary structure comprises 208 residues: Segregation and condensation protein B (208 aa).

This sequence belongs to the ScpB family. In terms of assembly, homodimer. Homodimerization may be required to stabilize the binding of ScpA to the Smc head domains. Component of a cohesin-like complex composed of ScpA, ScpB and the Smc homodimer, in which ScpA and ScpB bind to the head domain of Smc. The presence of the three proteins is required for the association of the complex with DNA.

The protein resides in the cytoplasm. In terms of biological role, participates in chromosomal partition during cell division. May act via the formation of a condensin-like complex containing Smc and ScpA that pull DNA away from mid-cell into both cell halves. The protein is Segregation and condensation protein B of Mycoplasma pneumoniae (strain ATCC 29342 / M129 / Subtype 1) (Mycoplasmoides pneumoniae).